The primary structure comprises 21 residues: Peptide PGLa-R3 (21 aa).

L21 is subject to Leucine amide.

In terms of tissue distribution, expressed by the skin glands.

It is found in the secreted. Antimicrobial peptide. The polypeptide is Peptide PGLa-R3 (Xenopus ruwenzoriensis (Uganda clawed frog)).